Reading from the N-terminus, the 150-residue chain is Transcriptional repressor NrdR (150 aa).

A zinc finger spans residues 3-34 (CPFCGYEETKVLDSRPVSNGTSIRRRRECLQC). Residues 49-139 (IRIIKKDGRR…VYKEFRDLDS (91 aa)) form the ATP-cone domain.

Belongs to the NrdR family. It depends on Zn(2+) as a cofactor.

In terms of biological role, negatively regulates transcription of bacterial ribonucleotide reductase nrd genes and operons by binding to NrdR-boxes. The sequence is that of Transcriptional repressor NrdR from Petrotoga mobilis (strain DSM 10674 / SJ95).